The following is a 294-amino-acid chain: Shikimate dehydrogenase (NADP(+)) (294 aa).

Residues 22–24 and Ser69 each bind shikimate; that span reads SLS. The active-site Proton acceptor is the Lys73. Asn94 and Asp111 together coordinate shikimate. Residues 135–139 and Leu236 each bind NADP(+); that span reads GAGGA. Tyr238 contacts shikimate. Gly260 lines the NADP(+) pocket.

It belongs to the shikimate dehydrogenase family. Homodimer.

The enzyme catalyses shikimate + NADP(+) = 3-dehydroshikimate + NADPH + H(+). Its pathway is metabolic intermediate biosynthesis; chorismate biosynthesis; chorismate from D-erythrose 4-phosphate and phosphoenolpyruvate: step 4/7. In terms of biological role, involved in the biosynthesis of the chorismate, which leads to the biosynthesis of aromatic amino acids. Catalyzes the reversible NADPH linked reduction of 3-dehydroshikimate (DHSA) to yield shikimate (SA). This Streptococcus equi subsp. zooepidemicus (strain H70) protein is Shikimate dehydrogenase (NADP(+)).